Reading from the N-terminus, the 474-residue chain is Immunoglobulin heavy constant mu (474 aa).

The segment at 1–105 (GSASAPTLFP…NKEKNVPLPV (105 aa)) is CH1. Residues 1–450 (GSASAPTLFP…EEGFENLWAT (450 aa)) lie on the Extracellular side of the membrane. Ig-like domains lie at 6–102 (PTLF…KNVP), 111–211 (PKVS…QNAS), 229–319 (PSFA…QTIS), and 329–430 (PDVY…RTVD). 2 disulfide bridges follow: Cys28/Cys88 and Cys134/Cys197. Residue Asn46 is glycosylated (N-linked (GlcNAc...) (complex) asparagine). Residues 106 to 217 (IAELPPKVSV…QNASSMCVPD (112 aa)) form a CH2 region. N-linked (GlcNAc...) (complex) asparagine glycosylation is present at Asn209. Positions 218-323 (QDTAIRVFAI…LKQTISRPKG (106 aa)) are CH3. 2 disulfides stabilise this stretch: Cys244–Cys303 and Cys351–Cys413. N-linked (GlcNAc...) asparagine glycosylation is found at Asn272 and Asn279. The interval 324 to 452 (VALHRPDVYL…GFENLWATAS (129 aa)) is CH4. An important for IgM oligomerization region spans residues 437–453 (VSADEEGFENLWATAST). Residue Asp440 is glycosylated (N-linked (GlcNAc...) asparagine). The helical transmembrane segment at 451–471 (ASTFIVLFLLSLFYSTTVTLF) threads the bilayer. The Cytoplasmic segment spans residues 472–474 (KVK).

The basic structural unit of both sIgM and mIgM molecules consists of two identical heavy chains and two identical light chains; disulfide-linked. N-terminal variable regions of the heavy and light chains form the antigen binding sites, whereas the C-terminal constant regions of the heavy chains interact with immune receptors to mediate effector functions. As to quaternary structure, part of IgM antibody. Forms high order oligomers, homopentamers stabilized by the JCHAIN and homohexamers that lack JCHAIN. The oligomerization amplifies an inherently low affinity of IgM antibodies for the antigen by multi-point attachment (avidity). Adjacent IgM protomers associate via interchain disulfide links to form an asymmetric pentameric structure with a 50 degree gap. A single copy of JCHAIN is covalently linked to the first and the fifth IgM monomers via interchain disulfide bonds thus closing the pentamer ring. Only JCHAIN-containing IgM binds PIGR secretory component (via D1-CDR1 region); this interaction is a prerequisite for IgM transcytosis across mucosal epithelium. Pentameric sIgM interacts (via CH4 domain) with FCRM (via Ig-like domain); the interaction is glycan-independent and multivalent theoretically involving up to eight binding sites for the IgM pentamer. Interacts with FCAMR; this interaction facilitates the endocytosis of IgM-coated microbes or IgM-antigen immune complexes. Antigen-bound IgM (via the Fc region) binds to globular domains of C1q component of the complement system, all three modules C1QA, C1QB and C1QC being involved in IgM binding; this interaction is multivalent. Pentameric sIgM (via Fc region) interacts with CD5L (via SRCR2) through interchain disulfide-linkages; this interaction protects CD5L from renal excretion and provides for high levels of CD5L in circulation. In terms of assembly, part of IgM B cell receptor complex on pre-B cells, immature and mature B cells. The BCR complex consists of one membrane-bound IgM molecule responsible for antigen binding, non-covalently associated with CD79A and CD79B signaling chains. N-glycosylated; important for IgM secretion and its localization at the plasma membrane. The interaction with FCMR is glycan-independent.

The protein resides in the secreted. It is found in the cell membrane. In terms of biological role, constant region of immunoglobulin heavy chains. Immunoglobulins, also known as antibodies, are membrane-bound or secreted glycoproteins produced by B lymphocytes. In the recognition phase of humoral immunity, the membrane-bound immunoglobulins serve as receptors which, upon binding of a specific antigen, trigger the clonal expansion and differentiation of B lymphocytes into immunoglobulins-secreting plasma cells. Secreted immunoglobulins mediate the effector phase of humoral immunity, which results in the elimination of bound antigens. The antigen binding site is formed by the variable domain of one heavy chain, together with that of its associated light chain. Thus, each immunoglobulin has two antigen binding sites with remarkable affinity for a particular antigen. The variable domains are assembled by a process called V-(D)-J rearrangement and can then be subjected to somatic hypermutations which, after exposure to antigen and selection, allow affinity maturation for a particular antigen. Functionally, constant region of secreted IgM (sIgM), also known as the Fc region of IgM antibody. Able to multimerize, forms high order polymers, mainly pentamers and occasionally hexamers, providing for multivalency and high avidity recognition of antigens. Natural sIgM are polyreactive and recognize conserved self- and pathogen-derived structures, whereas immune sIgM are secreted only upon exposure to pathogens and are antigen-specific. Both natural and immune sIgM are required for an efficient humoral immune response to infection. Mediates sIgM effector functions mostly via Fc receptors and the complement system. On lymphoid cells binds high-affinity Fc receptor FCMR and promotes induction of an efficient neutralizing IgG response while maintaining tolerance to self-antigens. Recruits C1q complement component to initiate the classical complement pathway, facilitating the recognition and neutralization of pathogens by the host. Together with C1q and mannose-binding lectin promotes the phagocytosis of apoptotic cells by macrophages, ensuring the clearance of potential autoimmune epitopes from tissues. Involved in mucosal immunity. It is transported by transcytosis across mucosal epithelium by PIGR and secreted on the apical side in complex with PIGR secretory component to scan mucosal lining for pathogens. IgM-antigen complexes undergo FCMR-mediated retrotranscytosis across mucosal M cells toward antigen-presenting cells in mucosal lymphoid tissues. Constant region of membrane-bound IgM, part of the B cell receptor complex (BCR). IgM BCR provides constitutive tonic signaling for B cell survival. Mediates pre-BCR signaling that regulates B cell selection and rearrangement of Ig genes via allelic exclusion. The chain is Immunoglobulin heavy constant mu from Homo sapiens (Human).